We begin with the raw amino-acid sequence, 88 residues long: MAHKKGTGSTRNGRDSNAKRLGVKAYGGETVTAGSILIRQRGTSVLPGVNVGKGKDDTLFALTDGIVKFESIRRGLRNRKRINITATA.

The interval M1–K24 is disordered.

Belongs to the bacterial ribosomal protein bL27 family.

The protein is Large ribosomal subunit protein bL27 of Synechococcus sp. (strain CC9605).